Reading from the N-terminus, the 1403-residue chain is Mannuronan C5-epimerase AlgE1 (1403 aa).

7 PbH1 repeats span residues D133–E155, T157–Y179, Q180–T202, T204–R226, A257–G279, A280–V302, and T320–G359. Disordered regions lie at residues S372–L395 and A408–R428. 8 Hemolysin-type calcium-binding repeats span residues G388–T403, G406–L422, G424–F440, G557–L573, V574–F591, E697–E712, G716–L732, and G734–F750. PbH1 repeat units follow at residues D977–E999, T1001–Y1023, L1024–T1046, T1048–R1070, T1101–G1123, T1124–V1146, T1163–E1185, and S1190–G1212. Hemolysin-type calcium-binding repeat units lie at residues G1227–L1243, Y1244–L1261, and G1263–F1279.

The protein belongs to the D-mannuronate C5-epimerase family. Ca(2+) is required as a cofactor.

It is found in the secreted. It carries out the reaction [(1-&gt;4)-beta-D-mannuronosyl](n) = [alginate](n). It functions in the pathway glycan biosynthesis; alginate biosynthesis. Its activity is regulated as follows. Inhibited by zinc. Its function is as follows. Converts beta-D-mannuronic acid (M) to alpha-L-guluronic acid (G), producing a polymer with gel-forming capacity, required for the formation of the cyst coat. The sequence is that of Mannuronan C5-epimerase AlgE1 from Azotobacter vinelandii.